The sequence spans 229 residues: Claudin-25 (229 aa).

Residues 1–10 (MAWSFRAKVQ) are Cytoplasmic-facing. A helical membrane pass occupies residues 11-31 (LGGLLLSLLGWVCSCVTTILP). At 32-81 (QWKTLNLELNEMETWIMGIWEVCVDREEVATVCKAFESFLSLPQELQVAR) the chain is on the extracellular side. A helical membrane pass occupies residues 82 to 102 (ILMVASHGLGLLGLLLCSFGS). Over 103–124 (ECFQFHRIRWVFKRRLGLLGRT) the chain is Cytoplasmic. The chain crosses the membrane as a helical span at residues 125-145 (LEASASATTLLPVSWVAHATI). The Extracellular portion of the chain corresponds to 146-164 (QDFWDDSIPDIIPRWEFGG). The helical transmembrane segment at 165-185 (ALYLGWAAGIFLALGGLLLIF) threads the bilayer. Residues 186–229 (SACLGKEDVPFPLMAGPTVPLSCAPVEESDGSFHLMLRPRNLVI) lie on the Cytoplasmic side of the membrane.

This sequence belongs to the claudin family.

It localises to the cell junction. The protein localises to the tight junction. The protein resides in the cell membrane. In terms of biological role, plays a major role in tight junction-specific obliteration of the intercellular space, through calcium-independent cell-adhesion activity. In Homo sapiens (Human), this protein is Claudin-25 (CLDN25).